A 480-amino-acid polypeptide reads, in one-letter code: Serralysin (480 aa).

Zn(2+) is bound at residue H181. E182 is an active-site residue. Zn(2+) is bound by residues H185 and H191. Ca(2+)-binding residues include R260, D263, D292, G294, G295, D297, T334, and E336. Hemolysin-type calcium-binding repeat units lie at residues I339–L356 and K357–L374.

The protein belongs to the peptidase M10B family. Zn(2+) is required as a cofactor. Ca(2+) serves as cofactor.

The protein resides in the secreted. It catalyses the reaction Preferential cleavage of bonds with hydrophobic residues in P1'.. The chain is Serralysin (prtA) from Photorhabdus laumondii subsp. laumondii (strain DSM 15139 / CIP 105565 / TT01) (Photorhabdus luminescens subsp. laumondii).